Here is a 326-residue protein sequence, read N- to C-terminus: Target of rapamycin complex subunit lst8 (326 aa).

WD repeat units lie at residues 1 to 37 (MNSN…CTRT), 40 to 80 (HQDS…PVIN), 83 to 122 (GVSK…LQCQ), 126 to 165 (QVNA…NEQL), 168 to 207 (ETDV…GEDL), 218 to 257 (AHKR…LMTE), and 268 to 309 (TSRG…REYS).

It belongs to the WD repeat LST8 family. Part of the mechanistic target of rapamycin complex 1 (mTORC1) which contains MTOR, MLST8 and RPTOR. Component of the mechanistic target of rapamycin complex 2 (mTORC2), consisting in two heterotretramers composed of MTOR, MLST8, RICTOR and MAPKAP1/SIN1.

It localises to the lysosome membrane. The protein localises to the cytoplasm. Functionally, subunit of both mTORC1 and mTORC2, which regulates cell growth and survival in response to nutrient and hormonal signals. mTORC1 is activated in response to growth factors or amino acids. In response to nutrients, mTORC1 is recruited to the lysosome membrane and promotes protein, lipid and nucleotide synthesis by phosphorylating several substrates, such as ribosomal protein S6 kinase (RPS6KB1 and RPS6KB2) and EIF4EBP1 (4E-BP1). In the same time, it inhibits catabolic pathways by phosphorylating the autophagy initiation components ULK1 and ATG13, as well as transcription factor TFEB, a master regulators of lysosomal biogenesis and autophagy. The mTORC1 complex is inhibited in response to starvation and amino acid depletion. Within mTORC1, MLST8 interacts directly with MTOR and enhances its kinase activity. In nutrient-poor conditions, stabilizes the MTOR-RPTOR interaction and favors RPTOR-mediated inhibition of MTOR activity. As part of the mTORC2 complex, transduces signals from growth factors to pathways involved in proliferation, cytoskeletal organization, lipogenesis and anabolic output. mTORC2 is also activated by growth factors, but seems to be nutrient-insensitive. In response to growth factors, mTORC2 phosphorylates and activates AGC protein kinase family members, including AKT (AKT1, AKT2 and AKT3), PKC (PRKCA, PRKCB and PRKCE) and SGK1. mTORC2 functions upstream of Rho GTPases to regulate the actin cytoskeleton, probably by activating one or more Rho-type guanine nucleotide exchange factors. mTORC2 promotes the serum-induced formation of stress-fibers or F-actin. Within mTORC2, MLST8 acts as a bridge between MAPKAP1/SIN1 and MTOR. The chain is Target of rapamycin complex subunit lst8 (mlst8) from Xenopus tropicalis (Western clawed frog).